The sequence spans 177 residues: Cytochrome c oxidase assembly protein CtaG (177 aa).

Topologically, residues 1-8 are cytoplasmic; that stretch reads MTQKAKNT. The helical; Signal-anchor for type II membrane protein transmembrane segment at 9–29 threads the bilayer; that stretch reads IYLLILIILSMLCLVYASVPL. Topologically, residues 30–177 are periplasmic; that stretch reads YSIFCKVTGY…TFFKYKETTK (148 aa).

This sequence belongs to the COX11/CtaG family.

The protein localises to the cell inner membrane. Functionally, exerts its effect at some terminal stage of cytochrome c oxidase synthesis, probably by being involved in the insertion of the copper B into subunit I. The chain is Cytochrome c oxidase assembly protein CtaG from Ehrlichia ruminantium (strain Gardel).